Consider the following 279-residue polypeptide: 4-hydroxy-3-methylbut-2-enyl diphosphate reductase (279 aa).

Cysteine 12 contributes to the [4Fe-4S] cluster binding site. The (2E)-4-hydroxy-3-methylbut-2-enyl diphosphate site is built by histidine 40 and histidine 72. Dimethylallyl diphosphate contacts are provided by histidine 40 and histidine 72. Residues histidine 40 and histidine 72 each coordinate isopentenyl diphosphate. Position 94 (cysteine 94) interacts with [4Fe-4S] cluster. Histidine 122 provides a ligand contact to (2E)-4-hydroxy-3-methylbut-2-enyl diphosphate. Residue histidine 122 coordinates dimethylallyl diphosphate. An isopentenyl diphosphate-binding site is contributed by histidine 122. Glutamate 124 serves as the catalytic Proton donor. Residue threonine 161 participates in (2E)-4-hydroxy-3-methylbut-2-enyl diphosphate binding. Cysteine 189 is a binding site for [4Fe-4S] cluster. (2E)-4-hydroxy-3-methylbut-2-enyl diphosphate contacts are provided by serine 217, asparagine 219, and serine 261. Residues serine 217, asparagine 219, and serine 261 each contribute to the dimethylallyl diphosphate site. Serine 217, asparagine 219, and serine 261 together coordinate isopentenyl diphosphate.

Belongs to the IspH family. [4Fe-4S] cluster is required as a cofactor.

The catalysed reaction is isopentenyl diphosphate + 2 oxidized [2Fe-2S]-[ferredoxin] + H2O = (2E)-4-hydroxy-3-methylbut-2-enyl diphosphate + 2 reduced [2Fe-2S]-[ferredoxin] + 2 H(+). It carries out the reaction dimethylallyl diphosphate + 2 oxidized [2Fe-2S]-[ferredoxin] + H2O = (2E)-4-hydroxy-3-methylbut-2-enyl diphosphate + 2 reduced [2Fe-2S]-[ferredoxin] + 2 H(+). The protein operates within isoprenoid biosynthesis; dimethylallyl diphosphate biosynthesis; dimethylallyl diphosphate from (2E)-4-hydroxy-3-methylbutenyl diphosphate: step 1/1. Its pathway is isoprenoid biosynthesis; isopentenyl diphosphate biosynthesis via DXP pathway; isopentenyl diphosphate from 1-deoxy-D-xylulose 5-phosphate: step 6/6. Functionally, catalyzes the conversion of 1-hydroxy-2-methyl-2-(E)-butenyl 4-diphosphate (HMBPP) into a mixture of isopentenyl diphosphate (IPP) and dimethylallyl diphosphate (DMAPP). Acts in the terminal step of the DOXP/MEP pathway for isoprenoid precursor biosynthesis. The sequence is that of 4-hydroxy-3-methylbut-2-enyl diphosphate reductase from Syntrophotalea carbinolica (strain DSM 2380 / NBRC 103641 / GraBd1) (Pelobacter carbinolicus).